We begin with the raw amino-acid sequence, 131 residues long: Small ribosomal subunit protein uS8 (131 aa).

This sequence belongs to the universal ribosomal protein uS8 family. In terms of assembly, part of the 30S ribosomal subunit. Contacts proteins S5 and S12.

Its function is as follows. One of the primary rRNA binding proteins, it binds directly to 16S rRNA central domain where it helps coordinate assembly of the platform of the 30S subunit. The chain is Small ribosomal subunit protein uS8 from Prosthecochloris aestuarii (strain DSM 271 / SK 413).